Reading from the N-terminus, the 1163-residue chain is Ankyrin repeat-containing protein F37A4.4 (1163 aa).

An ANK repeat occupies 856–885; that stretch reads YGNTALHVATRRGYQNLVEILIKHGADRSF. The 97-residue stretch at 929-1025 folds into the BRCT domain; sequence LCVPEKFPVS…KLIEKDCDYL (97 aa).

The polypeptide is Ankyrin repeat-containing protein F37A4.4 (Caenorhabditis elegans).